Reading from the N-terminus, the 1179-residue chain is Integrin alpha-7 (1179 aa).

The signal sequence occupies residues 1 to 33 (MARIPRCDFLRPPGIYYLITSLLAGLFLPPAIA). Residues 34–1076 (FNLDVMGAIR…YLDPMAVVVE (1043 aa)) are Extracellular-facing. FG-GAP repeat units lie at residues 38 to 103 (VMGA…ETDC), 110 to 175 (RGAN…IRDE), 185 to 238 (EGRP…SPDL), 292 to 349 (DRLT…ATRL), 350 to 411 (IPEV…HWAD), 412 to 467 (ISPL…GVVV), and 471 to 530 (QVLE…IDPR). Residue Asn86 is glycosylated (N-linked (GlcNAc...) asparagine). Cystine bridges form between Cys94–Cys103, Cys140–Cys163, and Cys184–Cys197. Ca(2+)-binding residues include Asp372, Asn374, Asp376, Asp380, Asp434, Asn436, Asp438, Asp442, Asp492, Asp494, Asn496, Tyr498, and Asp500. 6 disulfide bridges follow: Cys539/Cys546, Cys552/Cys615, Cys681/Cys687, Cys781/Cys792, Cys939/Cys993, and Cys999/Cys1004. An N-linked (GlcNAc...) asparagine glycan is attached at Asn784. Positions 952–961 (SRDRRRRELG) are enriched in basic and acidic residues. Residues 952–978 (SRDRRRRELGQPEPQEPPEKVEPSTSW) form a disordered region. N-linked (GlcNAc...) asparagine glycosylation is present at Asn988. N-linked (GlcNAc...) asparagine glycosylation is found at Asn1023 and Asn1043. The chain crosses the membrane as a helical span at residues 1077–1102 (GVPWWVILLGVLAGLLVLALLVLLLW). The Cytoplasmic portion of the chain corresponds to 1103-1179 (KLGFFKRAKH…PDGHPVPATA (77 aa)). A GFFKR motif motif is present at residues 1105–1109 (GFFKR). Positions 1134 to 1153 (KEEKTGTIQRSNWGNSQWEG) are disordered. Positions 1139-1152 (GTIQRSNWGNSQWE) are enriched in polar residues. 3 consecutive repeat copies span residues 1155-1158 (DAHP), 1163-1166 (DWHP), and 1171-1174 (DGHP). The 3 X 4 AA repeats of D-X-H-P stretch occupies residues 1155–1174 (DAHPILAADWHPELGPDGHP).

It belongs to the integrin alpha chain family. As to quaternary structure, heterodimer of an alpha and a beta subunit. The alpha subunit is composed of a heavy and a light chain linked by a disulfide bond. Alpha-7 associates with beta-1. Interacts with COMP. Interacts (via C-terminus intracellular tail region) with CIB1; the interaction is stabilized/increased in a calcium- and magnesium-dependent manner. ADP-ribosylated on at least two sites of the extracellular domain in skeletal myotubes (in vitro). Post-translationally, no proteolytic cleavage to produce the 70 kDa form is seen due to the presence of a Gly instead of an arginine residue at position 647. Isoforms containing segment X2 are found in adult heart, lung and skeletal muscle. Isoforms containing segment X1 are expressed in adult heart, lung and in proliferating skeletal myoblasts but not in adult skeletal muscle. Isoforms containing segment a are exclusively found in skeletal muscle. Isoforms containing segment B are widely expressed. In muscle fibers isoforms containing segment A and B are expressed at myotendinous and neuromuscular junctions; isoforms containing segment C are expressed at neuromuscular junctions and at extrasynaptic sites.

The protein resides in the membrane. Integrin alpha-7/beta-1 is the primary laminin receptor on skeletal myoblasts and adult myofibers. During myogenic differentiation, it may induce changes in the shape and mobility of myoblasts, and facilitate their localization at laminin-rich sites of secondary fiber formation. Involved in the maintenance of the myofibers cytoarchitecture as well as for their anchorage, viability and functional integrity. Mice carrying a ITGA7 null allele are viable and fertile, but show progressive muscular dystrophy starting soon after birth, but with a distinct variability in different muscle types. Required to promote contractile phenotype acquisition in differentiated airway smooth muscle (ASM) cells. Acts as a Schwann cell receptor for laminin-2. Acts as a receptor of COMP and mediates its effect on vascular smooth muscle cells (VSMCs) maturation. This Mus musculus (Mouse) protein is Integrin alpha-7 (Itga7).